We begin with the raw amino-acid sequence, 672 residues long: uncharacterized protein (672 aa).

The span at 1–10 shows a compositional bias: basic and acidic residues; it reads MAKSDGDDPL. The interval 1–41 is disordered; sequence MAKSDGDDPLRPASPRLRSSRRHSLRYSAYTGGPDPLAPPV.

This is an uncharacterized protein from Mycobacterium bovis (strain ATCC BAA-935 / AF2122/97).